Reading from the N-terminus, the 682-residue chain is Amphiphysin (682 aa).

2 coiled-coil regions span residues 10–84 (AKNV…LHEV) and 144–191 (DYDS…QEEL). In terms of domain architecture, BAR spans 24–240 (VLQKLGKADE…MTKLGDQHAD (217 aa)). Disordered stretches follow at residues 244 to 310 (TIQG…PKLT), 446 to 470 (ILAE…ETTG), 501 to 530 (GAVR…QEKV), and 561 to 606 (AAAE…ASDM). Residues 261–274 (PSPPEEVSPLPSPT) show a composition bias toward pro residues. A compositionally biased stretch (basic and acidic residues) spans 503–527 (VRTEQEAAAEGDKPQGEEKDVDVSQ). The span at 567 to 596 (TQGTDSETSQIGSEQKATEEIQTTPSQDQP) shows a compositional bias: polar residues. In terms of domain architecture, SH3 spans 609–682 (GFLFKVEVLH…FPENFTRHLE (74 aa)).

In terms of assembly, heterodimer with BIN1. Binds SH3GLB1. In terms of tissue distribution, is abundant in the forebrain and cerebellum. It is also found in the adrenal gland, anterior and posterior pituitary.

The protein localises to the cytoplasmic vesicle. It is found in the secretory vesicle. Its subcellular location is the synaptic vesicle membrane. The protein resides in the cytoplasm. It localises to the cytoskeleton. Its function is as follows. May participate in mechanisms of regulated exocytosis in synapses and certain endocrine cell types. May control the properties of the membrane associated cytoskeleton. The sequence is that of Amphiphysin (AMPH) from Gallus gallus (Chicken).